A 1190-amino-acid polypeptide reads, in one-letter code: DNA-directed RNA polymerase subunit beta (1190 aa).

The segment at 1155–1190 (ENFDDDDDHAPDAIMVDVKPAEREEAGEEKDAVTKE) is disordered. A compositionally biased stretch (basic and acidic residues) spans 1173–1190 (KPAEREEAGEEKDAVTKE).

This sequence belongs to the RNA polymerase beta chain family. In terms of assembly, the RNAP catalytic core consists of 2 alpha, 1 beta, 1 beta' and 1 omega subunit. When a sigma factor is associated with the core the holoenzyme is formed, which can initiate transcription.

The catalysed reaction is RNA(n) + a ribonucleoside 5'-triphosphate = RNA(n+1) + diphosphate. Functionally, DNA-dependent RNA polymerase catalyzes the transcription of DNA into RNA using the four ribonucleoside triphosphates as substrates. This is DNA-directed RNA polymerase subunit beta from Geobacillus kaustophilus (strain HTA426).